Here is a 170-residue protein sequence, read N- to C-terminus: Adenine phosphoribosyltransferase (170 aa).

This sequence belongs to the purine/pyrimidine phosphoribosyltransferase family. Homodimer.

It is found in the cytoplasm. The catalysed reaction is AMP + diphosphate = 5-phospho-alpha-D-ribose 1-diphosphate + adenine. It functions in the pathway purine metabolism; AMP biosynthesis via salvage pathway; AMP from adenine: step 1/1. In terms of biological role, catalyzes a salvage reaction resulting in the formation of AMP, that is energically less costly than de novo synthesis. The sequence is that of Adenine phosphoribosyltransferase from Nitrosopumilus maritimus (strain SCM1).